The chain runs to 354 residues: Biotin synthase (354 aa).

A Radical SAM core domain is found at 41-268; sequence NEVQISRLLS…LSRVRLSAGR (228 aa). The [4Fe-4S] cluster site is built by C56, C60, and C63. Residues C100, C131, C191, and R263 each coordinate [2Fe-2S] cluster.

This sequence belongs to the radical SAM superfamily. Biotin synthase family. Homodimer. [4Fe-4S] cluster serves as cofactor. [2Fe-2S] cluster is required as a cofactor.

It carries out the reaction (4R,5S)-dethiobiotin + (sulfur carrier)-SH + 2 reduced [2Fe-2S]-[ferredoxin] + 2 S-adenosyl-L-methionine = (sulfur carrier)-H + biotin + 2 5'-deoxyadenosine + 2 L-methionine + 2 oxidized [2Fe-2S]-[ferredoxin]. It functions in the pathway cofactor biosynthesis; biotin biosynthesis; biotin from 7,8-diaminononanoate: step 2/2. In terms of biological role, catalyzes the conversion of dethiobiotin (DTB) to biotin by the insertion of a sulfur atom into dethiobiotin via a radical-based mechanism. The polypeptide is Biotin synthase (Shewanella amazonensis (strain ATCC BAA-1098 / SB2B)).